Here is a 468-residue protein sequence, read N- to C-terminus: Argininosuccinate lyase (468 aa).

Belongs to the lyase 1 family. Argininosuccinate lyase subfamily.

It localises to the cytoplasm. It carries out the reaction 2-(N(omega)-L-arginino)succinate = fumarate + L-arginine. Its pathway is amino-acid biosynthesis; L-arginine biosynthesis; L-arginine from L-ornithine and carbamoyl phosphate: step 3/3. This chain is Argininosuccinate lyase, found in Paraburkholderia phytofirmans (strain DSM 17436 / LMG 22146 / PsJN) (Burkholderia phytofirmans).